We begin with the raw amino-acid sequence, 168 residues long: Peptidyl-prolyl cis-trans isomerase-like 3 (168 aa).

In terms of domain architecture, PPIase cyclophilin-type spans 1–156; the sequence is MSVTLHTNVG…SEIRMTGVTV (156 aa).

It belongs to the cyclophilin-type PPIase family. PPIL3 subfamily.

It catalyses the reaction [protein]-peptidylproline (omega=180) = [protein]-peptidylproline (omega=0). In terms of biological role, PPIases accelerate the folding of proteins. It catalyzes the cis-trans isomerization of proline imidic peptide bonds in oligopeptides. The polypeptide is Peptidyl-prolyl cis-trans isomerase-like 3 (CYP10) (Mycosarcoma maydis (Corn smut fungus)).